A 726-amino-acid chain; its full sequence is uncharacterized protein (726 aa).

Active-site charge relay system residues include Ser583 and His698.

The protein belongs to the peptidase S9B family.

This is an uncharacterized protein from Sinorhizobium fredii (strain NBRC 101917 / NGR234).